A 262-amino-acid polypeptide reads, in one-letter code: Nitrilase (262 aa).

Positions 2-237 (VKVAYVQMNP…EEVGVAEIDL (236 aa)) constitute a CN hydrolase domain. Residue Glu-42 is the Proton acceptor of the active site. Lys-113 acts as the Proton donor in catalysis. Residue Cys-146 is the Nucleophile of the active site. Residue 173–174 (VM) participates in substrate binding.

Belongs to the carbon-nitrogen hydrolase superfamily. In terms of assembly, homodimer.

The catalysed reaction is a nitrile + 2 H2O = a carboxylate + NH4(+). Enzymatic activity is inhibited in the presence of acetone, methanol and metal ions such as Ag(2+) and Hg(2+). Is also inhibited by various thiol reagents such as DTNB, p-chloromercuribenzoate, p-hydroxymercuribenzoate, iodacetamide and iodacetate. EDTA has no influence on activity. Functionally, nitrilase that hydrolyzes preferentially aliphatic nitriles like malononitrile and fumaronitrile in vitro. These dinitriles are converted to the corresponding monoacid mononitriles, showing the enzyme is regioselective. Cannot hydrolyze compounds with a nitrile group bound to an aromatic ring or amino acid. Its biological role is unknown. The sequence is that of Nitrilase from Pyrococcus abyssi (strain GE5 / Orsay).